A 317-amino-acid chain; its full sequence is Ribose-phosphate pyrophosphokinase (317 aa).

Residues 43-45 (DGE) and 102-103 (RQ) contribute to the ATP site. 2 residues coordinate Mg(2+): histidine 136 and aspartate 175. Lysine 198 is an active-site residue. D-ribose 5-phosphate is bound by residues arginine 200, aspartate 224, and 228-232 (DTAGT).

The protein belongs to the ribose-phosphate pyrophosphokinase family. Class I subfamily. Homohexamer. Mg(2+) is required as a cofactor.

It is found in the cytoplasm. It catalyses the reaction D-ribose 5-phosphate + ATP = 5-phospho-alpha-D-ribose 1-diphosphate + AMP + H(+). It participates in metabolic intermediate biosynthesis; 5-phospho-alpha-D-ribose 1-diphosphate biosynthesis; 5-phospho-alpha-D-ribose 1-diphosphate from D-ribose 5-phosphate (route I): step 1/1. Involved in the biosynthesis of the central metabolite phospho-alpha-D-ribosyl-1-pyrophosphate (PRPP) via the transfer of pyrophosphoryl group from ATP to 1-hydroxyl of ribose-5-phosphate (Rib-5-P). The polypeptide is Ribose-phosphate pyrophosphokinase (Bacillus anthracis).